Consider the following 367-residue polypeptide: Methylthioribose-1-phosphate isomerase (367 aa).

Residues R54–A56, R91, and Q201 contribute to the substrate site. D242 serves as the catalytic Proton donor. N252 to K253 lines the substrate pocket.

It belongs to the eIF-2B alpha/beta/delta subunits family. MtnA subfamily.

The enzyme catalyses 5-(methylsulfanyl)-alpha-D-ribose 1-phosphate = 5-(methylsulfanyl)-D-ribulose 1-phosphate. The protein operates within amino-acid biosynthesis; L-methionine biosynthesis via salvage pathway; L-methionine from S-methyl-5-thio-alpha-D-ribose 1-phosphate: step 1/6. Catalyzes the interconversion of methylthioribose-1-phosphate (MTR-1-P) into methylthioribulose-1-phosphate (MTRu-1-P). The chain is Methylthioribose-1-phosphate isomerase from Acidiphilium cryptum (strain JF-5).